Consider the following 464-residue polypeptide: Cysteine--tRNA ligase (464 aa).

Cysteine 30 lines the Zn(2+) pocket. Positions 32–42 match the 'HIGH' region motif; it reads MTVYDYCHIGH. The Zn(2+) site is built by cysteine 214, histidine 239, and glutamate 243. The 'KMSKS' region motif lies at 271–275; sequence KMSKS. ATP is bound at residue lysine 274.

Belongs to the class-I aminoacyl-tRNA synthetase family. As to quaternary structure, monomer. Zn(2+) serves as cofactor.

The protein resides in the cytoplasm. It carries out the reaction tRNA(Cys) + L-cysteine + ATP = L-cysteinyl-tRNA(Cys) + AMP + diphosphate. The sequence is that of Cysteine--tRNA ligase from Janthinobacterium sp. (strain Marseille) (Minibacterium massiliensis).